The primary structure comprises 123 residues: Small ribosomal subunit protein uS13 (123 aa).

A disordered region spans residues G95–K123.

This sequence belongs to the universal ribosomal protein uS13 family. Part of the 30S ribosomal subunit. Forms a loose heterodimer with protein S19. Forms two bridges to the 50S subunit in the 70S ribosome.

Its function is as follows. Located at the top of the head of the 30S subunit, it contacts several helices of the 16S rRNA. In the 70S ribosome it contacts the 23S rRNA (bridge B1a) and protein L5 of the 50S subunit (bridge B1b), connecting the 2 subunits; these bridges are implicated in subunit movement. Contacts the tRNAs in the A and P-sites. The polypeptide is Small ribosomal subunit protein uS13 (Heliobacterium modesticaldum (strain ATCC 51547 / Ice1)).